We begin with the raw amino-acid sequence, 1652 residues long: Maestro heat-like repeat-containing protein family member 1 (1652 aa).

7 HEAT repeats span residues 3 to 41, 260 to 300, 344 to 382, 385 to 423, 1369 to 1407, 1410 to 1448, and 1616 to 1652; these read ETYA…SKPA, EEQL…VGSR, CCSP…AAAA, EVKK…HGYL, LMLL…GSPD, QTHS…LMDL, and QVDL…VKFA.

Belongs to the MROH1 family. Homooligomer; homooligomerizes at lysosome scission sites.

The protein localises to the lysosome membrane. Its function is as follows. Lysosome fission factor. Recruited to lysosomes by RAB7 (RAB7A or RAB7B) at scission sites and homooligomerizes to mediate the constriction and scission of lysosomal tubules. May sever membranes by inserting amphipathic helices into one bilayer leaflet. Lysosome fission is required to maintain their steady-state number, shape, size, composition and function, and to accomplish regeneration. The polypeptide is Maestro heat-like repeat-containing protein family member 1 (MROH1) (Bos taurus (Bovine)).